We begin with the raw amino-acid sequence, 352 residues long: Histidinol-phosphate aminotransferase (352 aa).

Lys221 is modified (N6-(pyridoxal phosphate)lysine).

It belongs to the class-II pyridoxal-phosphate-dependent aminotransferase family. Histidinol-phosphate aminotransferase subfamily. Homodimer. It depends on pyridoxal 5'-phosphate as a cofactor.

It catalyses the reaction L-histidinol phosphate + 2-oxoglutarate = 3-(imidazol-4-yl)-2-oxopropyl phosphate + L-glutamate. It participates in amino-acid biosynthesis; L-histidine biosynthesis; L-histidine from 5-phospho-alpha-D-ribose 1-diphosphate: step 7/9. The sequence is that of Histidinol-phosphate aminotransferase from Staphylococcus aureus (strain MRSA252).